Here is a 553-residue protein sequence, read N- to C-terminus: MSEIALTVSVLALVAVVGLWIGNVKIRGVGFGIGGVLFGGIIVGHFVDQAGVALSSPMLHFIQEFGLILFVYTIGIQVGPGFFASLRVSGLRLNLFAILIVILGGLVTAVLHKLFDIPLPVVLGIFSGAVTNTPALGAGQQILRDLGVPFEVVDQMGMSYAMAYPFGICGILLTMWLVRLFFRINVEKEAQRFEESSGNGHAHLHTINVRVENPNLNQMAIQDVPMLNSDNIVCSRLKRGELLMVPAPGTLIQAGDLLHLVGRPEDLHNAQLVIGQEVATSLSTRGTDLKVERVVVTNEKVLGKKIRDLHVKQRYDVVISRLNRAGVELVASSSASLQFGDILNLVGRQEAIDAVAAELGNAQQKLQQVQMLPVFIGIGLGVLLGSIPLFIPGFPAALKLGLAGGPLIMALILGRIGSIGKLYWFMPPSANLALRELGIVLFLAVVGLKSGGDFVATLTQGEGLSWIAYGIFITAIPLLTVGILARMLAKMNYLTLCGMLAGSMTDPPALAFANNLHATSGAAALSYATVYPLVMFLRIITPQLLAVLFWGLS.

5 helical membrane passes run 4–24 (IALTVSVLALVAVVGLWIGNV), 28–48 (GVGFGIGGVLFGGIIVGHFVD), 65–85 (FGLILFVYTIGIQVGPGFFAS), 95–115 (LFAILIVILGGLVTAVLHKLF), and 158–178 (MSYAMAYPFGICGILLTMWLV). RCK C-terminal domains lie at 192–276 (RFEE…VIGQ) and 279–361 (ATSL…ELGN). 6 helical membrane-spanning segments follow: residues 371-391 (MLPVFIGIGLGVLLGSIPLFI), 403-425 (AGGPLIMALILGRIGSIGKLYWF), 437-457 (LGIVLFLAVVGLKSGGDFVAT), 464-484 (LSWIAYGIFITAIPLLTVGIL), 493-513 (YLTLCGMLAGSMTDPPALAFA), and 532-552 (PLVMFLRIITPQLLAVLFWGL).

It belongs to the AAE transporter (TC 2.A.81) family. YidE subfamily.

The protein resides in the cell membrane. In Klebsiella pneumoniae (strain 342), this protein is Putative transport protein KPK_0013.